The sequence spans 215 residues: Ras-related protein Rab-5A (215 aa).

GTP is bound by residues S29, A30, G32, K33, S34, S35, H46, E47, T52, and G78. S34 is a Mg(2+) binding site. 2 short sequence motifs (switch) span residues 44-56 (QFHE…IGAA) and 77-93 (AGQE…YRGA). T52 provides a ligand contact to Mg(2+). S84 is subject to Phosphoserine. GTP contacts are provided by N133, K134, D136, A164, and K165. Positions 181–215 (LPKNEPQNPGANSARGRGVDLTEPAQPARSQCCSN) are disordered. Residues C212 and C213 are each lipidated (S-geranylgeranyl cysteine).

This sequence belongs to the small GTPase superfamily. Rab family. As to quaternary structure, interacts with GDI1; this promotes dissociation from membranes; phosphorylation at Ser-84 disrupts this interaction. Interacts with GDI2; phosphorylation at Ser-84 disrupts the interaction. Interacts with EEA1. Interacts with RIN1 and GAPVD1, which regulate its pathway, probably by acting as a GEF. Interacts with ALS2CL, SUN2, ZFYVE20 and RUFY1. Interacts with RABEP1; one RABEP1 homodimer binds two RAB5A chains, but at opposite sides of the dimer. Interacts with SGSM1, SGSM3 and PIK3CB. Interacts with RINL. May be a component of a complex composed of RAB5A, DYN2 and PIK3C3. Does not interact with the BLOC-3 complex (heterodimer of HPS1 and HPS4). Interacts with CLN5. Interacts with APPL2. Interacts with F8A1/F8A2/F8A3. Found in a complex with F8A1/F8A2/F8A3, HTT and RAB5A; mediates the recruitment of HTT by RAB5A onto early endosomes. Interacts with ATP9A. Interacts with PPP1R21; mediates the recruitment of FERRY complex by RAB5A onto early endosomes. Mg(2+) serves as cofactor. Phosphorylation of Ser-84 in the switch II region by LRRK2 prevents the association of RAB regulatory proteins, including RAB GDP dissociation inhibitors GDI1 and GDI2.

It localises to the cell membrane. The protein localises to the early endosome membrane. It is found in the melanosome. Its subcellular location is the cytoplasmic vesicle. The protein resides in the cell projection. It localises to the ruffle. The protein localises to the membrane. It is found in the cytoplasm. Its subcellular location is the cytosol. The protein resides in the phagosome membrane. It localises to the endosome membrane. It catalyses the reaction GTP + H2O = GDP + phosphate + H(+). Its activity is regulated as follows. Regulated by guanine nucleotide exchange factors (GEFs) including RINL, which promote the exchange of bound GDP for free GTP. Regulated by GTPase activating proteins (GAPs) which increase the GTP hydrolysis activity. Inhibited by GDP dissociation inhibitors (GDIs). In terms of biological role, the small GTPases Rab are key regulators of intracellular membrane trafficking, from the formation of transport vesicles to their fusion with membranes. Rabs cycle between an inactive GDP-bound form and an active GTP-bound form that is able to recruit to membranes different sets of downstream effectors directly responsible for vesicle formation, movement, tethering and fusion. RAB5A is required for the fusion of plasma membranes and early endosomes. Contributes to the regulation of filopodia extension. Required for the exosomal release of SDCBP, CD63, PDCD6IP and syndecan. Regulates maturation of apoptotic cell-containing phagosomes, probably downstream of DYN2 and PIK3C3. This chain is Ras-related protein Rab-5A, found in Rattus norvegicus (Rat).